The chain runs to 393 residues: Putative odorant receptor 69a, isoform B (393 aa).

The Cytoplasmic portion of the chain corresponds to 1 to 39 (MQLEDFMRYPDLVCQAAQLPRYTWNGRRSLEVKRNLAKR). Residues 40 to 60 (IIFWLGAVNLVYHNIGCVMYG) traverse the membrane as a helical segment. Topologically, residues 61-69 (YFGDGRTKD) are extracellular. Residues 70–90 (PIAYLAELASVASMLGFTIVG) traverse the membrane as a helical segment. Residues 91–138 (TLNLWKMLSLKTHFENLLNEFEELFQLIKHRAYRIHHYQEKYTRHIRN) are Cytoplasmic-facing. A helical transmembrane segment spans residues 139 to 159 (TFIFHTSAVVYYNSLPILLMI). Residues 160–208 (REHFSNSQQLGYRIQSNTWYPWQVQGSIPGFFAAVACQIFSCQTNMCVN) are Extracellular-facing. The chain crosses the membrane as a helical span at residues 209-229 (MFIQFLINFFGIQLEIHFDGL). Over 230-269 (ARQLETIDARNPHAKDQLKYLIVYHTKLLNLADRVNRSFN) the chain is Cytoplasmic. The chain crosses the membrane as a helical span at residues 270–290 (FTFLISLSVSMISNCFLAFSM). The Extracellular segment spans residues 291 to 305 (TMFDFGTSLKHLLGL). A helical transmembrane segment spans residues 306–326 (LLFITYNFSMCRSGTHLILTS). Residues 327-365 (GKVLPAAFYNNWYEGDLVYRRMLLILMMRATKPYMWKTY) lie on the Cytoplasmic side of the membrane. A helical membrane pass occupies residues 366-386 (KLAPVSITTYMATLKFSYQMF). Residues 387-393 (TCVRSLK) lie on the Extracellular side of the membrane.

Belongs to the insect chemoreceptor superfamily. Heteromeric odorant receptor channel (TC 1.A.69) family. Or49a subfamily. In terms of assembly, interacts with Orco. Complexes exist early in the endomembrane system in olfactory sensory neurons (OSNs), coupling these complexes to the conserved ciliary trafficking pathway. Expressed in olfactory sensory neurons in the antenna.

Its subcellular location is the cell membrane. Functionally, odorant receptor which mediates acceptance or avoidance behavior, depending on its substrates. The odorant receptor repertoire encodes a large collection of odor stimuli that vary widely in identity, intensity, and duration. May form a complex with Orco to form odorant-sensing units, providing sensitive and prolonged odorant signaling and calcium permeability. The chain is Putative odorant receptor 69a, isoform B (Or69a) from Drosophila melanogaster (Fruit fly).